Here is a 154-residue protein sequence, read N- to C-terminus: Aspartate carbamoyltransferase regulatory chain (154 aa).

Zn(2+) is bound by residues Cys-109, Cys-114, Cys-138, and Cys-141.

It belongs to the PyrI family. As to quaternary structure, contains catalytic and regulatory chains. It depends on Zn(2+) as a cofactor.

Its function is as follows. Involved in allosteric regulation of aspartate carbamoyltransferase. The sequence is that of Aspartate carbamoyltransferase regulatory chain from Aeromonas salmonicida (strain A449).